We begin with the raw amino-acid sequence, 621 residues long: Chaperone protein HscA homolog (621 aa).

Belongs to the heat shock protein 70 family.

Its function is as follows. Chaperone involved in the maturation of iron-sulfur cluster-containing proteins. Has a low intrinsic ATPase activity which is markedly stimulated by HscB. This Cupriavidus necator (strain ATCC 17699 / DSM 428 / KCTC 22496 / NCIMB 10442 / H16 / Stanier 337) (Ralstonia eutropha) protein is Chaperone protein HscA homolog.